Here is a 151-residue protein sequence, read N- to C-terminus: UPF0208 membrane protein YfbV (151 aa).

Over 1–45 (MSTPDNRSVNFFSLFCRGQHYSKTWPLEKRLAPVFVENRVIKMTR) the chain is Cytoplasmic. The chain crosses the membrane as a helical span at residues 46-65 (YAIRFMPPIAVFTLCWQIAL). The Periplasmic portion of the chain corresponds to 66 to 68 (GGQ). The helical transmembrane segment at 69 to 91 (LGPAVATALFALSLPMQGLWWLG) threads the bilayer. Residues 92–151 (KRSVTPLPPAILNWFYEVRGKLQESGQVLAPVEGKPDYQALADTLKRAFKQLDKTFLDDL) are Cytoplasmic-facing.

The protein belongs to the UPF0208 family.

It localises to the cell inner membrane. In Escherichia coli O6:H1 (strain CFT073 / ATCC 700928 / UPEC), this protein is UPF0208 membrane protein YfbV (yfbV).